Reading from the N-terminus, the 234-residue chain is Coiled-coil domain-containing protein 194 (234 aa).

Residues 1–42 (MAEPGPEPGRAWRVLALCGVAVFLAAAAAGGALVAWNLAASA) form the signal peptide. Disordered regions lie at residues 44–67 (RGPRCPEPGANATAPPGDPPPGVD) and 187–234 (VLEA…RARG). The stretch at 66 to 163 (VDDLRRRLAE…TRRLDEALRR (98 aa)) forms a coiled coil. Positions 187–196 (VLEAEMSPQR) are enriched in low complexity. A compositionally biased stretch (basic residues) spans 197 to 217 (RVPRPRPRSGSRPRPSPRSRS).

In Homo sapiens (Human), this protein is Coiled-coil domain-containing protein 194.